We begin with the raw amino-acid sequence, 184 residues long: GTP-binding protein Rheb (184 aa).

Lysine 8 participates in a covalent cross-link: Glycyl lysine isopeptide (Lys-Gly) (interchain with G-Cter in ubiquitin). 8 residues coordinate GDP: serine 16, valine 17, glycine 18, lysine 19, serine 20, serine 21, valine 32, and aspartate 33. Serine 16 contributes to the GTP binding site. The GTP site is built by glycine 18, lysine 19, serine 20, serine 21, and valine 32. Serine 20 provides a ligand contact to Mg(2+). GTP-binding residues include tyrosine 35, threonine 38, asparagine 119, and aspartate 122. The Effector region signature appears at 35–43 (YDPTIENTF). Mg(2+) is bound at residue threonine 38. GDP is bound by residues asparagine 119 and aspartate 122. Serine 130 is subject to Phosphoserine; by MAPKAPK5. Alanine 150 is a GDP binding site. Alanine 150 contributes to the GTP binding site. Cysteine 181 carries the cysteine methyl ester modification. Cysteine 181 is lipidated: S-farnesyl cysteine. Residues 182–184 (SVM) constitute a propeptide, removed in mature form.

Belongs to the small GTPase superfamily. Rheb family. Associates with the mTORC1 complex (MTOR, MLST8 and RPTOR) in a guanyl nucleotide-independent manner. Interacts with TSC2. Interacts with MCRS1; the interaction maintains RHEB at the lysosome in its active GTP-bound form and prevents its interaction with the mTORC1 complex inhibitor TSC2, ensuring activation of the mTORC1 complex by RHEB. Interacts (when prenylated) with PDE6D; this promotes release from membranes. Post-translationally, farnesylation is important for efficiently activating mTORC1-mediated signaling. In terms of processing, polyubiquitinated in response to amino acid, promoting its interaction with MTOR and mTORC1 activation. Deubiquitination by ATXN3 promotes recruitment of the TSC-TBC complex and RHEB inactivation by TSC2. Monoubiquitinated at Lys-8 by RNF152, promoting its association with the TSC-TBC complex. Deubiquitinated at Lys-8 by USP4, promoting mTORC1 activation. Phosphorylation by MAPKAPK5 impairs GTP-binding and inactivation. In terms of tissue distribution, ubiquitous. Highest levels observed in skeletal and cardiac muscle.

It is found in the endomembrane system. The protein localises to the lysosome membrane. Its subcellular location is the golgi apparatus membrane. It localises to the endoplasmic reticulum membrane. The protein resides in the cytoplasm. It is found in the cytosol. It catalyses the reaction GTP + H2O = GDP + phosphate + H(+). With respect to regulation, alternates between an inactive form bound to GDP and an active form bound to GTP. Inactivated by the TSC-TBC complex via the GTPase activating protein (GAP) domain of TSC2. Autoinhibited by Tyr-35, which constrains the active site conformation, restricting the access of the catalytic Asp-65 to the nucleotide-binding pocket. Specifically inhibited by NR1 (4-bromo-6-(3,4-dichlorophenylthio)-1-(4-(dimethylcarbamoyl)benzyl)-1H-indole-2-carboxylic acid). Functionally, small GTPase that acts as an allosteric activator of the canonical mTORC1 complex, an evolutionarily conserved central nutrient sensor that stimulates anabolic reactions and macromolecule biosynthesis to promote cellular biomass generation and growth. In response to nutrients, growth factors or amino acids, specifically activates the protein kinase activity of MTOR, the catalytic component of the mTORC1 complex: acts by causing a conformational change that allows the alignment of residues in the active site of MTOR, thereby enhancing the phosphorylation of ribosomal protein S6 kinase (RPS6KB1 and RPS6KB2) and EIF4EBP1 (4E-BP1). RHEB is also required for localization of the TSC-TBC complex to lysosomal membranes. In response to starvation, RHEB is inactivated by the TSC-TBC complex, preventing activation of mTORC1. Has low intrinsic GTPase activity. In Homo sapiens (Human), this protein is GTP-binding protein Rheb.